The chain runs to 267 residues: Glutamate racemase (267 aa).

Substrate-binding positions include 13–14 and 45–46; these read DS and YS. Cys77 (proton donor/acceptor) is an active-site residue. 78 to 79 contacts substrate; it reads NT. Cys188 functions as the Proton donor/acceptor in the catalytic mechanism. 189–190 is a binding site for substrate; that stretch reads TH.

Belongs to the aspartate/glutamate racemases family.

The enzyme catalyses L-glutamate = D-glutamate. The protein operates within cell wall biogenesis; peptidoglycan biosynthesis. Its function is as follows. Provides the (R)-glutamate required for cell wall biosynthesis. This Histophilus somni (strain 129Pt) (Haemophilus somnus) protein is Glutamate racemase.